A 197-amino-acid chain; its full sequence is Imidazoleglycerol-phosphate dehydratase (197 aa).

This sequence belongs to the imidazoleglycerol-phosphate dehydratase family.

It is found in the cytoplasm. It catalyses the reaction D-erythro-1-(imidazol-4-yl)glycerol 3-phosphate = 3-(imidazol-4-yl)-2-oxopropyl phosphate + H2O. Its pathway is amino-acid biosynthesis; L-histidine biosynthesis; L-histidine from 5-phospho-alpha-D-ribose 1-diphosphate: step 6/9. The protein is Imidazoleglycerol-phosphate dehydratase of Gloeobacter violaceus (strain ATCC 29082 / PCC 7421).